Here is a 215-residue protein sequence, read N- to C-terminus: Adenylate kinase (215 aa).

Residue 10-15 participates in ATP binding; sequence GAGKGT. Positions 30–59 are NMP; that stretch reads STGDILRENVKNETELGKKAKEYMDKGLLV. AMP is bound by residues T31, R36, 57–59, 85–88, and Q92; these read LLV and GFPR. The segment at 126 to 163 is LID; sequence GRRICKNCGASFHVIYRPPQKEGVCDVCGGELYQREDD. Position 127 (R127) interacts with ATP. Zn(2+) contacts are provided by C130 and C133. Position 136-137 (136-137) interacts with ATP; that stretch reads SF. Zn(2+) is bound by residues C150 and C153. Positions 160 and 171 each coordinate AMP. Q198 contacts ATP.

It belongs to the adenylate kinase family. In terms of assembly, monomer.

It localises to the cytoplasm. It catalyses the reaction AMP + ATP = 2 ADP. The protein operates within purine metabolism; AMP biosynthesis via salvage pathway; AMP from ADP: step 1/1. Its function is as follows. Catalyzes the reversible transfer of the terminal phosphate group between ATP and AMP. Plays an important role in cellular energy homeostasis and in adenine nucleotide metabolism. The sequence is that of Adenylate kinase from Caldicellulosiruptor bescii (strain ATCC BAA-1888 / DSM 6725 / KCTC 15123 / Z-1320) (Anaerocellum thermophilum).